The following is a 113-amino-acid chain: MADVEDGEETCALASHSGSSGSKSGGDKMFSLKKWNAVAMWSWDVECDTCAICRVQVMDACLRCQAENKQEDCVVVWGECNHSFHNCCMSLWVKQNNRCPLCQQDWVVQRIGK.

The tract at residues 1-26 (MADVEDGEETCALASHSGSSGSKSGG) is disordered. At Ala-2 the chain carries N-acetylalanine. Residue Thr-10 is modified to Phosphothreonine; by CK2. Zn(2+) is bound by residues Cys-50, Cys-53, Cys-61, Cys-64, Cys-73, Cys-80, His-82, His-85, Cys-87, Cys-88, Cys-99, and Cys-102. The RING-type zinc finger occupies 61–103 (CLRCQAENKQEDCVVVWGECNHSFHNCCMSLWVKQNNRCPLCQ).

Belongs to the RING-box family. Catalytic component of multiple cullin-5-RING E3 ubiquitin-protein ligase complexes (ECS complexes, also named CRL5 complexes) composed of CUL5, Elongin BC (ELOB and ELOC), RNF7/RBX2 and a variable SOCS box domain-containing protein as substrate-specific recognition component. Also interacts (with lower preference) with CUL1, CUL2, CUL3, CUL4A and CUL4B; additional evidence is however required to confirm this result in vivo. Interacts with UBE2F. Interacts with CSNK2B, the interaction is not affected by phosphorylation by CK2. May also interact with DCUN1D1, DCUN1D2, DCUN1D3, DCUN1D4 and DCUN1D5. In terms of assembly, (Microbial infection) Following infection by HIV-1 virus, component of a cullin-5-RING E3 ubiquitin-protein ligase complex (ECS complex) hijacked by the HIV-1 Vif protein. In terms of processing, phosphorylation at Thr-10 by CK2 promotes its degradation by the proteasome. As to expression, expressed in heart, liver, skeletal muscle and pancreas. At very low levels expressed in brain, placenta and lung.

It localises to the cytoplasm. Its subcellular location is the nucleus. The enzyme catalyses S-ubiquitinyl-[E2 ubiquitin-conjugating enzyme]-L-cysteine + [acceptor protein]-L-lysine = [E2 ubiquitin-conjugating enzyme]-L-cysteine + N(6)-ubiquitinyl-[acceptor protein]-L-lysine.. It catalyses the reaction S-[NEDD8-protein]-yl-[E2 NEDD8-conjugating enzyme]-L-cysteine + [cullin]-L-lysine = [E2 NEDD8-conjugating enzyme]-L-cysteine + N(6)-[NEDD8-protein]-yl-[cullin]-L-lysine.. Its pathway is protein modification; protein ubiquitination. It participates in protein modification; protein neddylation. In terms of biological role, catalytic component of multiple cullin-5-RING E3 ubiquitin-protein ligase complexes (ECS complexes), which mediate the ubiquitination and subsequent proteasomal degradation of target proteins. It is thereby involved in various biological processes, such as cell cycle progression, signal transduction and transcription. The functional specificity of the E3 ubiquitin-protein ligase ECS complexes depend on the variable SOCS box-containing substrate recognition component. Within ECS complexes, RNF7/RBX2 recruits the E2 ubiquitination enzyme to the complex via its RING-type and brings it into close proximity to the substrate. Catalytic subunit of various SOCS-containing ECS complexes, such as the ECS(SOCS7) complex, that regulate reelin signaling by mediating ubiquitination and degradation of DAB1. The ECS(SOCS2) complex mediates the ubiquitination and subsequent proteasomal degradation of phosphorylated EPOR and GHR. Promotes ubiquitination and degradation of NF1, thereby regulating Ras protein signal transduction. As part of the ECS(ASB9) complex, catalyzes ubiquitination and degradation of CKB. The ECS(SPSB3) complex catalyzes ubiquitination of nuclear CGAS. As part of the ECS(RAB40C) complex, mediates ANKRD28 ubiquitination and degradation, thereby inhibiting protein phosphatase 6 (PP6) complex activity and focal adhesion assembly during cell migration. As part of some ECS complex, catalyzes 'Lys-11'-linked ubiquitination and degradation of BTRC. ECS complexes and ARIH2 collaborate in tandem to mediate ubiquitination of target proteins; ARIH2 mediating addition of the first ubiquitin on CRLs targets. Specifically catalyzes the neddylation of CUL5 via its interaction with UBE2F. Does not catalyze neddylation of other cullins (CUL1, CUL2, CUL3, CUL4A or CUL4B). May play a role in protecting cells from apoptosis induced by redox agents. Inactive. Functionally, (Microbial infection) Following infection by HIV-1 virus, catalytic component of a cullin-5-RING E3 ubiquitin-protein ligase complex (ECS complex) hijacked by the HIV-1 Vif protein, which catalyzes ubiquitination and degradation of APOBEC3F and APOBEC3G. This Homo sapiens (Human) protein is RING-box protein 2.